The sequence spans 585 residues: Amyloid protein-binding protein 2 (585 aa).

TPR repeat units follow at residues 50 to 83 (QGRL…HHCF), 120 to 153 (IQVG…CTLH), 206 to 239 (AALY…ITAG), 288 to 321 (SDTL…RQSV), 333 to 367 (HEDL…ITHI), 429 to 462 (AKHY…KEQL), 471 to 505 (ALSV…GKKL), and 514 to 547 (EYDY…NRLR).

Component of a CRL2 E3 ubiquitin-protein ligase complex, also named ECS (Elongin BC-CUL2/5-SOCS-box protein) complex, composed of CUL2, Elongin BC (ELOB and ELOC), RBX1 and substrate-specific adapter APPBP2. Interacts with APP; APP interaction inhibits the E3 ubiquitin-protein ligase activity of the CRL2(APPBP2) complex. Post-translationally, rapidly degraded by the proteasome upon overexpression of a C-terminal fragment of APP.

It localises to the nucleus. Its subcellular location is the cytoplasm. It is found in the cytoskeleton. The protein resides in the membrane. It functions in the pathway protein modification; protein ubiquitination. E3 ubiquitin-protein ligase activity of the CRL2(APPBP2) complex is inhibited by APP. In terms of biological role, substrate-recognition component of a Cul2-RING (CRL2) E3 ubiquitin-protein ligase complex of the DesCEND (destruction via C-end degrons) pathway, which recognizes a C-degron located at the extreme C terminus of target proteins, leading to their ubiquitination and degradation. The C-degron recognized by the DesCEND pathway is usually a motif of less than ten residues and can be present in full-length proteins, truncated proteins or proteolytically cleaved forms. The CRL2(APPBP2) complex specifically recognizes proteins with a -Arg-Xaa-Xaa-Gly degron at the C-terminus, leading to their ubiquitination and degradation. The CRL2(APPBP2) complex mediates ubiquitination and degradation of truncated SELENOV selenoproteins produced by failed UGA/Sec decoding, which end with a -Arg-Xaa-Xaa-Gly degron. May play a role in intracellular protein transport: may be involved in the translocation of APP along microtubules toward the cell surface. In Homo sapiens (Human), this protein is Amyloid protein-binding protein 2.